Reading from the N-terminus, the 263-residue chain is Single-stranded DNA-binding protein WHY1, chloroplastic (263 aa).

Residues 1-47 constitute a chloroplast transit peptide; sequence MSQLLSTPLMAVNSNPRFLSSSSVLVTGGFAVKRHGFALKPTTKTVK. A required for ssDNA binding region spans residues 89 to 94; the sequence is KGKAAL. The Nuclear localization signal signature appears at 167–180; it reads KGKSDEGKVRKVLK.

This sequence belongs to the Whirly family. In terms of assembly, homotetramer.

Its subcellular location is the plastid. The protein resides in the chloroplast. It localises to the nucleus. Single-stranded DNA-binding protein that functions in both chloroplasts and nucleus. In chloroplasts, maintains plastid genome stability by preventing break-induced and short homology-dependent illegitimate recombinations. In nucleus, modulates telomere length homeostasis by inhibiting the action of the telomerase at the extreme termini of chromosomes. Is recruited to a distal element upstream of the kinesin KP1 to mediate the transcriptional repression of KP1. Is required for full salicylic acid-dependent plant disease resistance responses. Can bind double-stranded DNA in vivo. The protein is Single-stranded DNA-binding protein WHY1, chloroplastic (WHY1) of Arabidopsis thaliana (Mouse-ear cress).